Consider the following 519-residue polypeptide: Serine/threonine-protein kinase RIO3 (519 aa).

Ser8, Ser112, Ser125, Ser127, and Ser128 each carry phosphoserine. The segment at 122–159 is disordered; the sequence is FEDSDSSEDEVDWQDTRDDPYRPAKPIPTPKKGFIGKG. Positions 124 to 134 are enriched in acidic residues; sequence DSDSSEDEVDW. Residues 251–519 form the Protein kinase domain; that stretch reads ETITGCISTG…DGSPPVLSAD (269 aa). Residues 257 to 265 and Lys290 contribute to the ATP site; that span reads ISTGKESVV. Asp406 serves as the catalytic Proton acceptor. Ser512 is subject to Phosphoserine.

The protein belongs to the protein kinase superfamily. RIO-type Ser/Thr kinase family. As to quaternary structure, interacts with CASP10. Interacts with IRF3; RIOK3 probably mediates the interaction of TBK1 with IRF3. Associated with 40S pre-ribosomal particles. Requires Mg(2+) as cofactor. Post-translationally, autophosphorylated (in vitro).

The protein resides in the cytoplasm. The enzyme catalyses L-seryl-[protein] + ATP = O-phospho-L-seryl-[protein] + ADP + H(+). It carries out the reaction L-threonyl-[protein] + ATP = O-phospho-L-threonyl-[protein] + ADP + H(+). In terms of biological role, involved in regulation of type I interferon (IFN)-dependent immune response which plays a critical role in the innate immune response against DNA and RNA viruses. May act as an adapter protein essential for the recruitment of TBK1 to IRF3. Phosphorylates IFIH1 on 'Ser-828' interfering with IFIH1 filament assembly on long dsRNA and resulting in attenuated IFIH1-signaling. Can inhibit CASP10 isoform 7-mediated activation of the NF-kappaB signaling pathway. May play a role in the biogenesis of the 40S ribosomal subunit. Involved in the processing of 21S pre-rRNA to the mature 18S rRNA. This is Serine/threonine-protein kinase RIO3 (Riok3) from Mus musculus (Mouse).